The primary structure comprises 193 residues: MRTFFRPALAAIIIFSVLTGVIYPALVTVIAQVTFPGQANGSLIEQAGQQRGSSLIGQQFDQPEYFWGRLSATGPVPYNAAASSGSNYGPLNPALAEAVQARIDALKAADPSNQLPIPVDLVTASASGLDPEISPAAANYQVQRVAAARGLAVEQVQQLVEQHTSQRTLGVLGEPRVNVLQLNIALDQIKSLD.

Residues 10–30 (AAIIIFSVLTGVIYPALVTVI) traverse the membrane as a helical segment.

Belongs to the KdpC family. As to quaternary structure, the system is composed of three essential subunits: KdpA, KdpB and KdpC.

It localises to the cell membrane. In terms of biological role, part of the high-affinity ATP-driven potassium transport (or Kdp) system, which catalyzes the hydrolysis of ATP coupled with the electrogenic transport of potassium into the cytoplasm. This subunit acts as a catalytic chaperone that increases the ATP-binding affinity of the ATP-hydrolyzing subunit KdpB by the formation of a transient KdpB/KdpC/ATP ternary complex. The sequence is that of Potassium-transporting ATPase KdpC subunit from Herpetosiphon aurantiacus (strain ATCC 23779 / DSM 785 / 114-95).